Consider the following 306-residue polypeptide: Glutaminase (306 aa).

Positions 61, 111, 157, 164, 188, 240, and 258 each coordinate substrate.

Belongs to the glutaminase family. Homotetramer.

It catalyses the reaction L-glutamine + H2O = L-glutamate + NH4(+). This Psychrobacter cryohalolentis (strain ATCC BAA-1226 / DSM 17306 / VKM B-2378 / K5) protein is Glutaminase.